Reading from the N-terminus, the 106-residue chain is UPF0145 protein Pput_2816 (106 aa).

This sequence belongs to the UPF0145 family.

The chain is UPF0145 protein Pput_2816 from Pseudomonas putida (strain ATCC 700007 / DSM 6899 / JCM 31910 / BCRC 17059 / LMG 24140 / F1).